The chain runs to 336 residues: Lipoyl synthase (336 aa).

Cys-81, Cys-86, Cys-92, Cys-107, Cys-111, Cys-114, and Ser-323 together coordinate [4Fe-4S] cluster. The 220-residue stretch at 93 to 312 (FGHGTATFMI…EDYGYELGFS (220 aa)) folds into the Radical SAM core domain.

Belongs to the radical SAM superfamily. Lipoyl synthase family. [4Fe-4S] cluster serves as cofactor.

It localises to the cytoplasm. The catalysed reaction is [[Fe-S] cluster scaffold protein carrying a second [4Fe-4S](2+) cluster] + N(6)-octanoyl-L-lysyl-[protein] + 2 oxidized [2Fe-2S]-[ferredoxin] + 2 S-adenosyl-L-methionine + 4 H(+) = [[Fe-S] cluster scaffold protein] + N(6)-[(R)-dihydrolipoyl]-L-lysyl-[protein] + 4 Fe(3+) + 2 hydrogen sulfide + 2 5'-deoxyadenosine + 2 L-methionine + 2 reduced [2Fe-2S]-[ferredoxin]. Its pathway is protein modification; protein lipoylation via endogenous pathway; protein N(6)-(lipoyl)lysine from octanoyl-[acyl-carrier-protein]: step 2/2. Catalyzes the radical-mediated insertion of two sulfur atoms into the C-6 and C-8 positions of the octanoyl moiety bound to the lipoyl domains of lipoate-dependent enzymes, thereby converting the octanoylated domains into lipoylated derivatives. This Stenotrophomonas maltophilia (strain K279a) protein is Lipoyl synthase.